The following is a 442-amino-acid chain: Probable D-serine dehydratase (442 aa).

Residue K115 is modified to N6-(pyridoxal phosphate)lysine.

The protein belongs to the serine/threonine dehydratase family. DsdA subfamily. It depends on pyridoxal 5'-phosphate as a cofactor.

It carries out the reaction D-serine = pyruvate + NH4(+). The polypeptide is Probable D-serine dehydratase (Halalkalibacterium halodurans (strain ATCC BAA-125 / DSM 18197 / FERM 7344 / JCM 9153 / C-125) (Bacillus halodurans)).